Consider the following 457-residue polypeptide: MHISKPAGPLPASVPFYRQLYFQVVVAIVLGALLGHFEPAFAESLKPLGDAFIKLVKMIIAPVIFLTIVTGIAGMTHLKTVGRVFGKAMAYFLFFSTLALVVGLVVAHVVQPGAGMNINPADLDQSAVKSYVEKSHDLTLVGFLMDIIPNSLIGAFTGDQVVNGKLTGPNILQVLFVAVLFGVSLALVGERGKPVLNLLEALIAPVFKLVHILMRAAPIGAFGAIAFTIGKYGVESLVNLAWLVGSFYLTSLLFVLVILGLVSRLCGFSVLKLIRYLKAELLLVLGTSSSESALPSLMEKMEKAGCEKSVVGLVVPTGYSFNLDGTNIYMTLAALFIAQATNTELTLGHQIALLAVAMLSSKGAAGVTGAGFITLAATLAVVPEVPVAGMALILGVDRFMSECRSLTNFIGNAVATVVVSRWENALDRDRLKLVLDGGEPPLLAPVGQPGVAPASLR.

Helical transmembrane passes span 20–42, 51–73, 88–110, 138–158, 166–188, 212–234, and 241–263; these read LYFQ…PAFA, AFIK…TGIA, AMAY…AHVV, LTLV…AFTG, LTGP…LALV, ILMR…KYGV, and AWLV…GLVS.

Belongs to the dicarboxylate/amino acid:cation symporter (DAACS) (TC 2.A.23) family.

It is found in the cell inner membrane. Responsible for the transport of dicarboxylates such as succinate, fumarate, and malate from the periplasm across the membrane. This is C4-dicarboxylate transport protein from Xanthomonas axonopodis pv. citri (strain 306).